Consider the following 191-residue polypeptide: Imidazoleglycerol-phosphate dehydratase (191 aa).

This sequence belongs to the imidazoleglycerol-phosphate dehydratase family.

The protein resides in the cytoplasm. It carries out the reaction D-erythro-1-(imidazol-4-yl)glycerol 3-phosphate = 3-(imidazol-4-yl)-2-oxopropyl phosphate + H2O. It participates in amino-acid biosynthesis; L-histidine biosynthesis; L-histidine from 5-phospho-alpha-D-ribose 1-diphosphate: step 6/9. This is Imidazoleglycerol-phosphate dehydratase from Methanococcoides burtonii (strain DSM 6242 / NBRC 107633 / OCM 468 / ACE-M).